The primary structure comprises 1126 residues: [F-actin]-monooxygenase mical2 (1126 aa).

The interval 2 to 494 is monooxygenase domain; sequence GENGDDKHGR…KHLFITNELQ (493 aa). FAD is bound by residues Cys-97, 116 to 118, 123 to 125, Phe-183, Tyr-299, and Asp-399; these read EKR and RNN. Positions 516 to 619 constitute a Calponin-homology (CH) domain; the sequence is DVRPNKLLIW…MVLYLSKFYE (104 aa). The Nuclear localization signal signature appears at 659–680; that stretch reads RKRVPKDEKTSDDSDLNKRRKT. 2 disordered regions span residues 748-830 and 892-935; these read AVTA…SLSS and PSLG…SGMS. A compositionally biased stretch (pro residues) spans 792-803; the sequence is VRPPVQPRPGPA. The span at 805–824 shows a compositional bias: basic and acidic residues; that stretch reads PTRELRVVERAQSHPDDLGR. The span at 918 to 932 shows a compositional bias: low complexity; the sequence is SSSDSSPSSAPSRKS. In terms of domain architecture, LIM zinc-binding spans 1001 to 1063; the sequence is DTCYFCKRRV…QPHFMHSVTK (63 aa). 8 residues coordinate Zn(2+): Cys-1003, Cys-1006, His-1024, Cys-1027, Cys-1030, Cys-1033, Cys-1053, and His-1056.

This sequence belongs to the Mical family. It depends on FAD as a cofactor.

Its subcellular location is the nucleus. It localises to the cytoplasm. It catalyses the reaction L-methionyl-[F-actin] + NADPH + O2 + H(+) = L-methionyl-(R)-S-oxide-[F-actin] + NADP(+) + H2O. In terms of biological role, nuclear monooxygenase that promotes depolymerization of F-actin by mediating oxidation of specific methionine residues on actin and regulates the srf signaling. Acts by modifying nuclear actin subunits through the addition of oxygen to form methionine-sulfoxide, leading to promote actin filament severing and prevent repolymerization. Acts as a key regulator of the srf signaling pathway elicited by nerve growth factor and serum: mediates oxidation and subsequent depolymerization of nuclear actin, leading to increase mkl1/mrtf-a presence in the nucleus and promote srf:mkl1/mrtf-a-dependent gene transcription. This Xenopus tropicalis (Western clawed frog) protein is [F-actin]-monooxygenase mical2.